Here is a 416-residue protein sequence, read N- to C-terminus: Exodeoxyribonuclease 7 large subunit (416 aa).

Belongs to the XseA family. In terms of assembly, heterooligomer composed of large and small subunits.

It is found in the cytoplasm. The catalysed reaction is Exonucleolytic cleavage in either 5'- to 3'- or 3'- to 5'-direction to yield nucleoside 5'-phosphates.. Functionally, bidirectionally degrades single-stranded DNA into large acid-insoluble oligonucleotides, which are then degraded further into small acid-soluble oligonucleotides. This is Exodeoxyribonuclease 7 large subunit from Nitratiruptor sp. (strain SB155-2).